The following is a 213-amino-acid chain: Motile sperm domain-containing protein 1 (213 aa).

An MSP domain is found at 16–143 (PVFVFPTELI…KEHLTESLFF (128 aa)). A run of 2 helical transmembrane segments spans residues 159–179 (SLLTVFLGVVCIAALMLPTLG) and 191–211 (LSVNQKLVAAYILGLITMAIL). Residues 205–208 (LITM) carry the Nuclear export signal motif.

The protein resides in the endoplasmic reticulum membrane. It localises to the golgi apparatus membrane. Plays a role in differentiation and/or proliferation of mesenchymal stem cells. Proposed to be involved in epithelial-to-mesenchymal transition (EMT). However, another study suggests that it is not required for EMT or stem cell self-renewal and acts during later stages of differentiation. The chain is Motile sperm domain-containing protein 1 (MOSPD1) from Homo sapiens (Human).